The sequence spans 252 residues: 3-deoxy-manno-octulosonate cytidylyltransferase (252 aa).

Belongs to the KdsB family.

It localises to the cytoplasm. The enzyme catalyses 3-deoxy-alpha-D-manno-oct-2-ulosonate + CTP = CMP-3-deoxy-beta-D-manno-octulosonate + diphosphate. It participates in nucleotide-sugar biosynthesis; CMP-3-deoxy-D-manno-octulosonate biosynthesis; CMP-3-deoxy-D-manno-octulosonate from 3-deoxy-D-manno-octulosonate and CTP: step 1/1. It functions in the pathway bacterial outer membrane biogenesis; lipopolysaccharide biosynthesis. Functionally, activates KDO (a required 8-carbon sugar) for incorporation into bacterial lipopolysaccharide in Gram-negative bacteria. The sequence is that of 3-deoxy-manno-octulosonate cytidylyltransferase from Phocaeicola vulgatus (strain ATCC 8482 / DSM 1447 / JCM 5826 / CCUG 4940 / NBRC 14291 / NCTC 11154) (Bacteroides vulgatus).